A 929-amino-acid polypeptide reads, in one-letter code: Protein unc-45 homolog A (929 aa).

TPR repeat units follow at residues 6 to 39, 43 to 76, and 77 to 110; these read VEQL…DATP, AVLH…DGGD, and VKAL…EPKN. Lys55 bears the N6-acetyllysine mark. The residue at position 468 (Lys468) is an N6-acetyllysine.

In terms of assembly, interacts with PGR isoforms A and B as well as with NR3C1 in the absence of ligand, and with HSP90AB1. Binding to HSP90AB1 involves 2 UNC45A monomers per HSP90AB1 dimer.

The protein localises to the cytoplasm. It localises to the perinuclear region. The protein resides in the nucleus. Functionally, may act as co-chaperone for HSP90 (Potential). Prevents the stimulation of HSP90AB1 ATPase activity by AHSA1. Positive factor in promoting PGR function in the cell. May be necessary for proper folding of myosin (Potential). Necessary for normal cell proliferation. Necessary for normal myotube formation and myosin accumulation during muscle cell development. May play a role in erythropoiesis in stroma cells in the spleen. This is Protein unc-45 homolog A (UNC45A) from Pongo abelii (Sumatran orangutan).